We begin with the raw amino-acid sequence, 57 residues long: Small ribosomal subunit protein eS27 (57 aa).

The Zn(2+) site is built by C10, C13, C29, and C32. The C4-type zinc-finger motif lies at 10–32 (CGDCENEQVVFGKASSVVSCAVC).

The protein belongs to the eukaryotic ribosomal protein eS27 family. In terms of assembly, part of the 30S ribosomal subunit. Requires Zn(2+) as cofactor.

This Halorubrum lacusprofundi (strain ATCC 49239 / DSM 5036 / JCM 8891 / ACAM 34) protein is Small ribosomal subunit protein eS27.